Here is an 826-residue protein sequence, read N- to C-terminus: Eukaryotic translation initiation factor 3 subunit C (826 aa).

Disordered stretches follow at residues 1–71 and 205–227; these read MSRF…GKGA and SGGD…PRAK. Residues 10–20 are compositionally biased toward acidic residues; that stretch reads DSDDSSSDEDL. The segment covering 21–30 has biased composition (low complexity); the sequence is YGSGSESGSD. Over residues 32 to 65 the composition is skewed to acidic residues; that stretch reads SQDEQDGGDDNDDDMSDDSMFADDSDDDSDDDED. A compositionally biased stretch (basic and acidic residues) spans 218 to 227; sequence KEDKPKPRAK. The region spanning 605 to 779 is the PCI domain; it reads FHTHINLELL…NSVVFTQAVQ (175 aa).

This sequence belongs to the eIF-3 subunit C family. In terms of assembly, component of the eukaryotic translation initiation factor 3 (eIF-3) complex.

The protein localises to the cytoplasm. Its function is as follows. Component of the eukaryotic translation initiation factor 3 (eIF-3) complex, which is involved in protein synthesis of a specialized repertoire of mRNAs and, together with other initiation factors, stimulates binding of mRNA and methionyl-tRNAi to the 40S ribosome. The eIF-3 complex specifically targets and initiates translation of a subset of mRNAs involved in cell proliferation. This chain is Eukaryotic translation initiation factor 3 subunit C, found in Yarrowia lipolytica (strain CLIB 122 / E 150) (Yeast).